Consider the following 370-residue polypeptide: Aldo-keto reductase dtxS3 (370 aa).

Residue aspartate 78 coordinates NADP(+). The active-site Proton donor is tyrosine 83. Histidine 174 is a substrate binding site. NADP(+) is bound by residues serine 204–serine 205, glutamine 230, glycine 259–arginine 269, and glycine 333–alanine 341.

It belongs to the aldo/keto reductase family.

The protein operates within secondary metabolite biosynthesis. In terms of biological role, aldo-keto reductase; part of the gene cluster that mediates the biosynthesis of destruxins, insecticidal cyclic hexadepsipeptides which induce flaccid paralysis and visceral muscle contraction in insects through targeting the calcium channels and vacuolar-type ATPases. The aldo-keto reductase dtxS3 converts alpha-ketoisocaproic acid from deaminated leucine into alpha-hydroxyisocaproic acid (HIC), which is the first substrate for destruxin assembly by dtxS1. L-aspartate decarboxylase dtxS4 converts aspartic acid into beta-alanine, the last substrate for the destruxin assembly line performed by dtxS1. The nonribosomal peptide synthetase dtxS1 synthesizes destruxins B and B2, whereas the cytochrome P450 monooxygenase dtxS2 is required to convert destruxin B into other destruxin derivatives, including destructins C, D, A and E. Destruxin E-diol (ED) is further produced in a non-enzymatic manner from destruxin E. Destruxins play an important role in virulence and escape from insect host immune defenses. This is Aldo-keto reductase dtxS3 from Metarhizium robertsii (strain ARSEF 23 / ATCC MYA-3075) (Metarhizium anisopliae (strain ARSEF 23)).